Here is a 132-residue protein sequence, read N- to C-terminus: uncharacterized protein (132 aa).

Helical transmembrane passes span 6-26 (WIYA…RAFS), 34-54 (NTYL…GFLF), 59-79 (TMIT…SQLY), and 106-126 (IEAY…VLGI).

The protein localises to the cell membrane. This is an uncharacterized protein from Bacillus subtilis (strain 168).